A 90-amino-acid polypeptide reads, in one-letter code: Lantipeptide prochlorosin 1.7 (90 aa).

The propeptide occupies 1–68 (MSEEQLKAFI…DAELEGVAGG (68 aa)). 2,3-didehydrobutyrine is present on residues threonine 69 and threonine 73. Positions 76-79 (SITC) form a cross-link, lanthionine (Ser-Cys). 2 consecutive cross-links (beta-methyllanthionine (Thr-Cys)) follow at residues 78–82 (TCETC) and 81–90 (TCDLLVGKMC).

In terms of processing, cross-links are proved in vitro, when coepressed in E.coli with the ProcM lanthionine synthetase. Post-translationally, the lanthionine residue has a DL configuration (with 2S,6R stereochemistry), whereas the beta-methyllanthionine residues have a DL configuration (with 2S,3S,6R stereochemistry). Maturation of prochlorosin involves the enzymatic conversion of Thr, and Ser into dehydrated AA and the formation of thioether bonds with cysteines. This is followed by membrane translocation and cleavage of the modified precursor.

Its subcellular location is the secreted. Functionally, lanthionine-containing peptide (lantipeptide) with unknown function. Does not show antibiotic activity against Lactococcus lactis 117 and Bacillus subtilis 6633 bacteria. Organisms that produce this peptide live in oligotrophic environments at very dilute concentrations, suggesting this peptide is not secreted to influence other bacteria. In Prochlorococcus marinus (strain MIT 9313), this protein is Lantipeptide prochlorosin 1.7.